The sequence spans 266 residues: Aliphatic sulfonates import ATP-binding protein SsuB (266 aa).

Positions 23-244 (LALDAITKHY…RRGSAKLAEL (222 aa)) constitute an ABC transporter domain. Position 55 to 62 (55 to 62 (GRSGCGKS)) interacts with ATP.

It belongs to the ABC transporter superfamily. Aliphatic sulfonates importer (TC 3.A.1.17.2) family. The complex is composed of two ATP-binding proteins (SsuB), two transmembrane proteins (SsuC) and a solute-binding protein (SsuA).

It is found in the cell inner membrane. It carries out the reaction ATP + H2O + aliphatic sulfonate-[sulfonate-binding protein]Side 1 = ADP + phosphate + aliphatic sulfonateSide 2 + [sulfonate-binding protein]Side 1.. Part of the ABC transporter complex SsuABC involved in aliphatic sulfonates import. Responsible for energy coupling to the transport system. The protein is Aliphatic sulfonates import ATP-binding protein SsuB of Pectobacterium atrosepticum (strain SCRI 1043 / ATCC BAA-672) (Erwinia carotovora subsp. atroseptica).